The sequence spans 234 residues: Thiamine import ATP-binding protein ThiQ (234 aa).

In terms of domain architecture, ABC transporter spans 2–230 (LTLQQVHYYY…HSHPELVEFF (229 aa)). 32–39 (GPSGAGKS) provides a ligand contact to ATP.

This sequence belongs to the ABC transporter superfamily. Thiamine importer (TC 3.A.1.19.1) family. The complex is composed of two ATP-binding proteins (ThiQ), two transmembrane proteins (ThiP) and a solute-binding protein (ThiB).

The protein resides in the cell inner membrane. It carries out the reaction thiamine(out) + ATP + H2O = thiamine(in) + ADP + phosphate + H(+). Its function is as follows. Part of the ABC transporter complex ThiBPQ involved in thiamine import. Responsible for energy coupling to the transport system. In Vibrio vulnificus (strain CMCP6), this protein is Thiamine import ATP-binding protein ThiQ.